A 392-amino-acid chain; its full sequence is Formate-dependent phosphoribosylglycinamide formyltransferase (392 aa).

Residues 15 to 16 (EL) and Glu75 contribute to the N(1)-(5-phospho-beta-D-ribosyl)glycinamide site. ATP-binding positions include Arg107, Lys148, 153–158 (SSGKGQ), 188–191 (EEFL), and Glu196. The region spanning 112-302 (DLASEELALL…EFELHLRAVL (191 aa)) is the ATP-grasp domain. Residues Glu261 and Glu273 each coordinate Mg(2+). N(1)-(5-phospho-beta-D-ribosyl)glycinamide contacts are provided by residues Asp280, Lys350, and 357-358 (RR).

The protein belongs to the PurK/PurT family. Homodimer.

It catalyses the reaction N(1)-(5-phospho-beta-D-ribosyl)glycinamide + formate + ATP = N(2)-formyl-N(1)-(5-phospho-beta-D-ribosyl)glycinamide + ADP + phosphate + H(+). The protein operates within purine metabolism; IMP biosynthesis via de novo pathway; N(2)-formyl-N(1)-(5-phospho-D-ribosyl)glycinamide from N(1)-(5-phospho-D-ribosyl)glycinamide (formate route): step 1/1. Involved in the de novo purine biosynthesis. Catalyzes the transfer of formate to 5-phospho-ribosyl-glycinamide (GAR), producing 5-phospho-ribosyl-N-formylglycinamide (FGAR). Formate is provided by PurU via hydrolysis of 10-formyl-tetrahydrofolate. The protein is Formate-dependent phosphoribosylglycinamide formyltransferase of Prochlorococcus marinus (strain MIT 9303).